Consider the following 136-residue polypeptide: Putative pre-16S rRNA nuclease (136 aa).

This sequence belongs to the YqgF nuclease family.

Its subcellular location is the cytoplasm. In terms of biological role, could be a nuclease involved in processing of the 5'-end of pre-16S rRNA. This chain is Putative pre-16S rRNA nuclease, found in Francisella tularensis subsp. novicida (strain U112).